Reading from the N-terminus, the 335-residue chain is uncharacterized protein (335 aa).

Disordered regions lie at residues 152-179 (IQLP…TVND) and 252-271 (LDLF…SASL). Ser257 and Ser260 each carry phosphoserine. A compositionally biased stretch (polar residues) spans 257 to 271 (SPSSENKSTAGSASL).

This is an uncharacterized protein from Schizosaccharomyces pombe (strain 972 / ATCC 24843) (Fission yeast).